The chain runs to 69 residues: Protein hunchback (69 aa).

3 C2H2-type zinc fingers span residues lysine 1–histidine 11, phenylalanine 17–histidine 39, and tyrosine 45–histidine 69.

It belongs to the hunchback C2H2-type zinc-finger protein family.

Its subcellular location is the nucleus. In terms of biological role, gap class segmentation protein that controls development of head structures. This Apis mellifera (Honeybee) protein is Protein hunchback (hb).